Here is a 207-residue protein sequence, read N- to C-terminus: Ras-related protein RABH1d (207 aa).

G16–T23 provides a ligand contact to GTP. Positions Y38–F46 match the Effector region motif. Residues D64–Q68, N122–D125, and S152–A153 each bind GTP. Residues C205 and C207 are each lipidated (S-geranylgeranyl cysteine). A Cysteine methyl ester modification is found at C207.

The protein belongs to the small GTPase superfamily. Rab family.

The protein resides in the golgi apparatus membrane. Its function is as follows. Protein transport. Regulator of membrane traffic from the Golgi apparatus towards the endoplasmic reticulum (ER). This Arabidopsis thaliana (Mouse-ear cress) protein is Ras-related protein RABH1d (RABH1D).